The primary structure comprises 874 residues: Bifunctional uridylyltransferase/uridylyl-removing enzyme (874 aa).

Positions 1-332 (MTLQSPLTFR…NGGASEDAEI (332 aa)) are uridylyltransferase. The interval 333-692 (IDEDFQRRGA…ISKKATRGGT (360 aa)) is uridylyl-removing. The HD domain maps to 451-573 (VDEHSIRLLK…VRDEEYLEYL (123 aa)). ACT domains are found at residues 693–777 (EVFV…RTPN) and 800–874 (LMEF…SVSA).

Belongs to the GlnD family. Mg(2+) serves as cofactor.

It catalyses the reaction [protein-PII]-L-tyrosine + UTP = [protein-PII]-uridylyl-L-tyrosine + diphosphate. It carries out the reaction [protein-PII]-uridylyl-L-tyrosine + H2O = [protein-PII]-L-tyrosine + UMP + H(+). With respect to regulation, uridylyltransferase (UTase) activity is inhibited by glutamine, while glutamine activates uridylyl-removing (UR) activity. Functionally, modifies, by uridylylation and deuridylylation, the PII regulatory proteins (GlnB and homologs), in response to the nitrogen status of the cell that GlnD senses through the glutamine level. Under low glutamine levels, catalyzes the conversion of the PII proteins and UTP to PII-UMP and PPi, while under higher glutamine levels, GlnD hydrolyzes PII-UMP to PII and UMP (deuridylylation). Thus, controls uridylylation state and activity of the PII proteins, and plays an important role in the regulation of nitrogen assimilation and metabolism. This Vibrio campbellii (strain ATCC BAA-1116) protein is Bifunctional uridylyltransferase/uridylyl-removing enzyme.